The primary structure comprises 242 residues: Probable transcriptional regulatory protein XOO1543 (242 aa).

This sequence belongs to the TACO1 family.

It is found in the cytoplasm. This Xanthomonas oryzae pv. oryzae (strain MAFF 311018) protein is Probable transcriptional regulatory protein XOO1543.